Reading from the N-terminus, the 174-residue chain is Protein C2-DOMAIN ABA-RELATED 2 (174 aa).

Residue Met1 is modified to N-acetylmethionine. In terms of domain architecture, C2 spans 1–104 (MENMLGLLRL…EAIRIQNQLG (104 aa)). Ca(2+)-binding residues include Arg21, Asp22, Asp27, Asp73, Arg74, Asp75, and Asp81.

The protein belongs to the plant CAR protein family. As to quaternary structure, binds to PYR/PYL/RCAR abscisic acid intracellular receptors in an ABA-independent manner, both at the plasma membrane and in the nucleus. Ca(2+) is required as a cofactor.

The protein resides in the cell membrane. Its subcellular location is the nucleus. In terms of biological role, stimulates the GTPase/ATPase activities of Obg-like ATPases. Mediates the transient calcium-dependent interaction of PYR/PYL/RCAR abscisic acid (ABA) receptors with the plasma membrane and thus regulates ABA sensitivity. In Arabidopsis thaliana (Mouse-ear cress), this protein is Protein C2-DOMAIN ABA-RELATED 2.